Consider the following 416-residue polypeptide: Glutamyl-tRNA reductase (416 aa).

Substrate-binding positions include 51-54, Ser-110, 115-117, and Gln-121; these read TCNR and EPQ. The active-site Nucleophile is Cys-52. 190–195 is a binding site for NADP(+); the sequence is GAGQTG.

It belongs to the glutamyl-tRNA reductase family. In terms of assembly, homodimer.

The enzyme catalyses (S)-4-amino-5-oxopentanoate + tRNA(Glu) + NADP(+) = L-glutamyl-tRNA(Glu) + NADPH + H(+). Its pathway is porphyrin-containing compound metabolism; protoporphyrin-IX biosynthesis; 5-aminolevulinate from L-glutamyl-tRNA(Glu): step 1/2. Catalyzes the NADPH-dependent reduction of glutamyl-tRNA(Glu) to glutamate 1-semialdehyde (GSA). This is Glutamyl-tRNA reductase from Francisella tularensis subsp. holarctica (strain OSU18).